The chain runs to 99 residues: HssA/B-like protein 42 (99 aa).

The segment at 1 to 29 is disordered; the sequence is MTLFSSISSMSTSMSGSKSSISSFGSGTS.

The protein belongs to the hssA/B family.

In Dictyostelium discoideum (Social amoeba), this protein is HssA/B-like protein 42 (hssl42).